Consider the following 212-residue polypeptide: uncharacterized protein (212 aa).

Low complexity predominate over residues 87 to 105; the sequence is NNNNNNNNNNNHNHNNSNN. Positions 87–107 are disordered; that stretch reads NNNNNNNNNNNHNHNNSNNTA.

This is an uncharacterized protein from Saccharomyces cerevisiae (strain ATCC 204508 / S288c) (Baker's yeast).